Consider the following 252-residue polypeptide: Chitooligosaccharide deacetylase (252 aa).

Mg(2+)-binding residues include His61 and His125.

It belongs to the YdjC deacetylase family. ChbG subfamily. As to quaternary structure, homodimer. It depends on Mg(2+) as a cofactor.

Its subcellular location is the cytoplasm. The catalysed reaction is N,N'-diacetylchitobiose + H2O = N-acetyl-beta-D-glucosaminyl-(1-&gt;4)-D-glucosamine + acetate. The enzyme catalyses diacetylchitobiose-6'-phosphate + H2O = N'-monoacetylchitobiose-6'-phosphate + acetate. The protein operates within glycan degradation; chitin degradation. Functionally, involved in the degradation of chitin. ChbG is essential for growth on the acetylated chitooligosaccharides chitobiose and chitotriose but is dispensable for growth on cellobiose and chitosan dimer, the deacetylated form of chitobiose. Deacetylation of chitobiose-6-P and chitotriose-6-P is necessary for both the activation of the chb promoter by the regulatory protein ChbR and the hydrolysis of phosphorylated beta-glucosides by the phospho-beta-glucosidase ChbF. Catalyzes the removal of only one acetyl group from chitobiose-6-P to yield monoacetylchitobiose-6-P, the inducer of ChbR and the substrate of ChbF. The chain is Chitooligosaccharide deacetylase from Escherichia coli O6:H1 (strain CFT073 / ATCC 700928 / UPEC).